The primary structure comprises 350 residues: Arginine N-succinyltransferase (350 aa).

Leu125 provides a ligand contact to succinyl-CoA. His229 functions as the Proton donor in the catalytic mechanism.

Belongs to the arginine N-succinyltransferase family.

It catalyses the reaction succinyl-CoA + L-arginine = N(2)-succinyl-L-arginine + CoA + H(+). The protein operates within amino-acid degradation; L-arginine degradation via AST pathway; L-glutamate and succinate from L-arginine: step 1/5. In terms of biological role, catalyzes the transfer of succinyl-CoA to arginine to produce N(2)-succinylarginine. This Yersinia pestis protein is Arginine N-succinyltransferase.